Here is a 224-residue protein sequence, read N- to C-terminus: Proteasome subunit beta (224 aa).

The propeptide at 1–6 (MDVMKG) is removed in mature form; by autocatalysis. The active-site Nucleophile is the T7.

The protein belongs to the peptidase T1B family. In terms of assembly, the 20S proteasome core is composed of 14 alpha and 14 beta subunits that assemble into four stacked heptameric rings, resulting in a barrel-shaped structure. The two inner rings, each composed of seven catalytic beta subunits, are sandwiched by two outer rings, each composed of seven alpha subunits. The catalytic chamber with the active sites is on the inside of the barrel. Has a gated structure, the ends of the cylinder being occluded by the N-termini of the alpha-subunits. Is capped at one or both ends by the proteasome regulatory ATPase, PAN.

The protein localises to the cytoplasm. The enzyme catalyses Cleavage of peptide bonds with very broad specificity.. With respect to regulation, the formation of the proteasomal ATPase PAN-20S proteasome complex, via the docking of the C-termini of PAN into the intersubunit pockets in the alpha-rings, triggers opening of the gate for substrate entry. Interconversion between the open-gate and close-gate conformations leads to a dynamic regulation of the 20S proteasome proteolysis activity. Component of the proteasome core, a large protease complex with broad specificity involved in protein degradation. The polypeptide is Proteasome subunit beta (Methanocaldococcus fervens (strain DSM 4213 / JCM 15782 / AG86) (Methanococcus fervens)).